The sequence spans 194 residues: Potassium-transporting ATPase KdpC subunit (194 aa).

Residues 12-34 (LFLLLLTGGVYPLLTTALGQWWF) form a helical membrane-spanning segment.

The protein belongs to the KdpC family. In terms of assembly, the system is composed of three essential subunits: KdpA, KdpB and KdpC.

The protein resides in the cell inner membrane. In terms of biological role, part of the high-affinity ATP-driven potassium transport (or Kdp) system, which catalyzes the hydrolysis of ATP coupled with the electrogenic transport of potassium into the cytoplasm. This subunit acts as a catalytic chaperone that increases the ATP-binding affinity of the ATP-hydrolyzing subunit KdpB by the formation of a transient KdpB/KdpC/ATP ternary complex. This Salmonella agona (strain SL483) protein is Potassium-transporting ATPase KdpC subunit.